We begin with the raw amino-acid sequence, 465 residues long: FAD-dependent monooxygenase pyr5 (465 aa).

Residues 1-16 (MRVLIIGGSIAGLTLA) form the signal peptide. FAD-binding residues include glutamate 30, glycine 44, and arginine 103. The active site involves tyrosine 210. FAD contacts are provided by aspartate 306 and alanine 319. The chain crosses the membrane as a helical span at residues 440 to 456 (PTFPLTVAGLCLVAIVI).

It belongs to the paxM FAD-dependent monooxygenase family. The cofactor is FAD.

The protein resides in the membrane. The enzyme catalyses 4-hydroxy-3-[(2E,6E)-farnesyl]-6-(pyridin-3-yl)-2H-pyran-2-one + NADPH + O2 + H(+) = 2-oxo-3-[(8S)-epoxy-(2E,6E)-farnesyl]-6-(pyridin-3-yl)-2H-pyran-4-olate + NADP(+) + H2O. The protein operates within secondary metabolite biosynthesis; terpenoid biosynthesis. FAD-dependent monooxygenase; part of the gene cluster that mediates the biosynthesis of pyripyropene A, a specific human acyl-coenzyme A:cholesterol acyltransferase 2 inhibitor. The first step of the pathway is the synthesis of nicotinyl-CoA from nicotinic acid by the nicotinic acid-CoA ligase pyr1. Nicotinyl-CoA is then a substrate of polyketide synthase pyr2 to produce 4-hydroxy-6-(3-pyridinyl)-2H-pyran-2-one (HPPO) which is further prenylated by the polyprenyl transferase pyr6 to yield farnesyl-HPPO. The next steps consist of an epoxidation of farnesyl-HPPO to epoxyfarnesyl-HPPO by FAD-dependent monooxygenase pyr5 and a cyclization of the terpenoid portion by the terpene cyclase pyr4 to yield deacetyl-pyripyropene E. The 2 cytochrome P450 monooxygenases pyr3 and pyr9, and the 2 acetyltransferases pyr7 and pyr8 are involved in the conversion of deacetyl-pyripyropene E into pyripyropene A through several cycles of oxidation and acetylation steps. Pyr7 acetylates deacetyl-pyripyropene E to pyripyropene E which is oxidized to 11-deacetyl-pyripyropene O by pyr3, which is in turn acetylated into pyripyropene O by pyr8. Pyripyropene O is then oxidized to deacetyl-pyripyropene A by pyr9. Deacetyl-pyripyropene A is finally acetylated to pyripyropene A by pyr8. The polypeptide is FAD-dependent monooxygenase pyr5 (Aspergillus fumigatus (strain ATCC MYA-4609 / CBS 101355 / FGSC A1100 / Af293) (Neosartorya fumigata)).